A 487-amino-acid chain; its full sequence is 26S proteasome non-ATPase regulatory subunit 3 homolog B (487 aa).

Positions 1–21 (MTQDVEMKDNQTPTQSVVSAP) are disordered. Residues 10–21 (NQTPTQSVVSAP) are compositionally biased toward polar residues. The region spanning 239 to 420 (CRYLFYLGKI…GCMVSKETGD (182 aa)) is the PCI domain. Residues 452–487 (PPNTHREKESEEKRREMKQQEEELAKYMAEEDDDDF) form a disordered region. The span at 455–480 (THREKESEEKRREMKQQEEELAKYMA) shows a compositional bias: basic and acidic residues.

It belongs to the proteasome subunit S3 family. Component of the 19S regulatory particle (RP/PA700) lid subcomplex of the 26S proteasome. The 26S proteasome is composed of a core protease (CP), known as the 20S proteasome, capped at one or both ends by the 19S regulatory particle (RP/PA700). The RP/PA700 complex is composed of at least 17 different subunits in two subcomplexes, the base and the lid, which form the portions proximal and distal to the 20S proteolytic core, respectively. Interacts with UCH1 and UCH2. As to expression, preferentially expressed in flowers.

Acts as a regulatory subunit of the 26 proteasome which is involved in the ATP-dependent degradation of ubiquitinated proteins. In Arabidopsis thaliana (Mouse-ear cress), this protein is 26S proteasome non-ATPase regulatory subunit 3 homolog B.